The sequence spans 73 residues: Guanine nucleotide-binding protein G(I)/G(S)/G(O) subunit gamma-11 (73 aa).

Positions 54–73 (VKGIPEDKNPFKEKGSCIIS) are disordered. C70 carries the cysteine methyl ester modification. A lipid anchor (S-farnesyl cysteine) is attached at C70. Positions 71–73 (IIS) are cleaved as a propeptide — removed in mature form.

The protein belongs to the G protein gamma family. G proteins are composed of 3 units, alpha, beta and gamma. Interacts with beta-1 and beta-3, but not with beta-2.

The protein localises to the cell membrane. In terms of biological role, guanine nucleotide-binding proteins (G proteins) are involved as a modulator or transducer in various transmembrane signaling systems. The beta and gamma chains are required for the GTPase activity, for replacement of GDP by GTP, and for G protein-effector interaction. The sequence is that of Guanine nucleotide-binding protein G(I)/G(S)/G(O) subunit gamma-11 (GNG11) from Bos taurus (Bovine).